Consider the following 372-residue polypeptide: Anhydro-N-acetylmuramic acid kinase (372 aa).

18–25 (GTSLDGID) lines the ATP pocket.

It belongs to the anhydro-N-acetylmuramic acid kinase family.

It catalyses the reaction 1,6-anhydro-N-acetyl-beta-muramate + ATP + H2O = N-acetyl-D-muramate 6-phosphate + ADP + H(+). It functions in the pathway amino-sugar metabolism; 1,6-anhydro-N-acetylmuramate degradation. Its pathway is cell wall biogenesis; peptidoglycan recycling. In terms of biological role, catalyzes the specific phosphorylation of 1,6-anhydro-N-acetylmuramic acid (anhMurNAc) with the simultaneous cleavage of the 1,6-anhydro ring, generating MurNAc-6-P. Is required for the utilization of anhMurNAc either imported from the medium or derived from its own cell wall murein, and thus plays a role in cell wall recycling. The chain is Anhydro-N-acetylmuramic acid kinase from Thiobacillus denitrificans (strain ATCC 25259 / T1).